Here is a 304-residue protein sequence, read N- to C-terminus: Voltage-dependent anion channel-forming protein YneE (304 aa).

4 helical membrane passes run 28-48 (LLLNFLLSIAVIIMLPWYTML), 50-70 (IKFTLAPFSILGVAIAIFLGF), 209-229 (AYTLILHRTVYLFCIMLPFAL), and 235-255 (YMTPFISVLISYTFIALDALA).

Belongs to the anion channel-forming bestrophin (TC 1.A.46) family.

Its subcellular location is the cell membrane. This is Voltage-dependent anion channel-forming protein YneE (yneE) from Salmonella typhi.